The following is a 422-amino-acid chain: Blood group Rh(D) polypeptide (422 aa).

12 helical membrane passes run 13-33, 43-63, 76-96, 113-135, 137-159, 170-190, 215-235, 244-266, 272-292, 294-314, 335-355, and 372-392; these read LPLWAFGLQVTFILLFYFLIG, FMAIYQVIQDLTLVAALGFGF, VAFSFFMLALGVQGTILLDYF, FLSIQRATISTLPLLISAGAVLG, VNLVQLAVMVLVEAMTFGAIRVA, IIMMYGHVFGAYFGLTVAWWL, LFAMLGTLFLWIFWPSINSAL, AVFNTYYALAVSTVTATSMSALS, INMVHIHNAVLAGGVAVGAPS, LISSPWIAMVLGLTAGLISIW, YTFGLPGLLGALTYYCLHIIA, and VGALSFAMAMGMVTGLLTGCL.

The protein belongs to the ammonium transporter (TC 2.A.49) family. Rh subfamily. Palmitoylated.

The protein resides in the cell membrane. In terms of biological role, may be part of an oligomeric complex which is likely to have a transport or channel function in the erythrocyte membrane. This is Blood group Rh(D) polypeptide (Rhd) from Rattus norvegicus (Rat).